A 151-amino-acid chain; its full sequence is MATMVAGISLRGPVMSSHRTFSVTKRASLPQSKLSSELSFVTSQLSGLKISSTHFISSSAPLSVPFKPSLQPVARRICPFTGKKSNRANKVSHSNHKTKKLQFVNLQYKRIWWEAGKRYVKLRLSTKAIKTIEKNGLDAVAKKAGIDLSKK.

Residues 1–74 constitute a chloroplast transit peptide; it reads MATMVAGISL…PFKPSLQPVA (74 aa).

The protein belongs to the bacterial ribosomal protein bL28 family. As to quaternary structure, part of the 50S ribosomal subunit.

The protein localises to the plastid. The protein resides in the chloroplast. The polypeptide is Large ribosomal subunit protein bL28c (RPL28) (Nicotiana tabacum (Common tobacco)).